The chain runs to 391 residues: Candidapepsin-1 (391 aa).

The first 18 residues, 1 to 18 (MFLKNIFIALAIALLVDA), serve as a signal peptide directing secretion. The propeptide at 19 to 50 (SPAKRSPGFVTLDFDVIKTPVNATGQEGKVKR) is activation peptide. The N-linked (GlcNAc...) asparagine glycan is linked to N40. Residues 64-377 (YAADITIGSN…DLDDDKISLA (314 aa)) form the Peptidase A1 domain. The active site involves D82. The cysteines at positions 97 and 109 are disulfide-linked. The active site involves D267. An intrachain disulfide couples C305 to C343.

The protein belongs to the peptidase A1 family. Post-translationally, O-glycosylated.

The protein localises to the secreted. It carries out the reaction Preferential cleavage at the carboxyl of hydrophobic amino acids, but fails to cleave 15-Leu-|-Tyr-16, 16-Tyr-|-Leu-17 and 24-Phe-|-Phe-25 of insulin B chain. Activates trypsinogen, and degrades keratin.. In Candida albicans (strain WO-1) (Yeast), this protein is Candidapepsin-1 (SAP1).